The primary structure comprises 135 residues: UPF0225 protein CV_3559 (135 aa).

This sequence belongs to the UPF0225 family.

The sequence is that of UPF0225 protein CV_3559 from Chromobacterium violaceum (strain ATCC 12472 / DSM 30191 / JCM 1249 / CCUG 213 / NBRC 12614 / NCIMB 9131 / NCTC 9757 / MK).